A 414-amino-acid chain; its full sequence is Lactosylceramide alpha-2,3-sialyltransferase (414 aa).

The Cytoplasmic segment spans residues 1–65 (MHTEAVGGAA…MRRPSLLIKD (65 aa)). A helical; Signal-anchor for type II membrane protein transmembrane segment spans residues 66–86 (ICKCTLVAFGVWLLYILILNY). Residues 87–414 (TAEECDMKRM…VVEDLSGGIH (328 aa)) are Lumenal-facing. Cys194 and Cys352 are disulfide-bonded. Asn235, Asn279, and Asn389 each carry an N-linked (GlcNAc...) asparagine glycan.

The protein belongs to the glycosyltransferase 29 family. In terms of tissue distribution, mainly expressed in brain, and then testis, heart and liver, almost all tissues showed some levels of the gene expression.

The protein localises to the golgi apparatus membrane. It catalyses the reaction a beta-D-Gal-(1-&gt;4)-beta-D-Glc-(1&lt;-&gt;1)-Cer(d18:1(4E)) + CMP-N-acetyl-beta-neuraminate = a ganglioside GM3 (d18:1(4E)) + CMP + H(+). The enzyme catalyses ganglioside GA2 (d18:1(4E)/18:0) + CMP-N-acetyl-beta-neuraminate = ganglioside GM2 (d18:1(4E)/18:0) + CMP + H(+). It carries out the reaction a beta-D-Gal-(1&lt;-&gt;1')-ceramide + CMP-N-acetyl-beta-neuraminate = N-acetyl-alpha-neuraminosyl-(2-&gt;3)-beta-D-galactosyl-(1&lt;-&gt;1')-ceramide + CMP + H(+). The catalysed reaction is ganglioside GA1 (d18:1(4E)/18:0) + CMP-N-acetyl-beta-neuraminate = ganglioside GM1 (d18:1(4E)/18:0) + CMP + H(+). Its function is as follows. (Microbial infection) Gangliosides GD1b and GT1b (derived from GM3) may serve as receptors for some C.botulinum neurotoxins (minimally types BoNT/A, B, C). In terms of biological role, transfers the sialyl group (N-acetyl-alpha-neuraminyl or NeuAc) from CMP-NeuAc to the non-reducing terminal galactose (Gal) of glycosphingolipids forming gangliosides (important molecules involved in the regulation of multiple cellular processes, including cell proliferation and differentiation, apoptosis, embryogenesis, development, and oncogenesis). Mainly involved in the biosynthesis of ganglioside GM3 but can also use different glycolipids as substrate acceptors such as D-galactosylceramide (GalCer), asialo-GM2 (GA2) and asialo-GM1 (GA1), although less preferentially than beta-D-Gal-(1-&gt;4)-beta-D-Glc-(1&lt;-&gt;1)-Cer (LacCer). The sequence is that of Lactosylceramide alpha-2,3-sialyltransferase (St3gal5) from Mus musculus (Mouse).